Reading from the N-terminus, the 1649-residue chain is eIF-2-alpha kinase GCN2 (1649 aa).

Disordered regions lie at residues 1 to 25, 138 to 158, and 227 to 256; these read MAGG…RQDH, NKPP…QEEQ, and HGGS…YSVC. An RWD domain is found at 25–137; the sequence is HELQALEAIY…YHVQSFLSEH (113 aa). Residues 146 to 205 adopt a coiled-coil conformation; sequence HEEMLERRAQEEQQRLLEAKRKEEQEQREILHEIQRRKEEIKEEKKRKEMAKQERLEIAS. Residue serine 230 is modified to Phosphoserine. The segment covering 237-249 has biased composition (basic residues); sequence GKHRANSSGRSRR. Protein kinase domains are found at residues 296–539 and 590–1001; these read VYNA…HSFI and FEEL…SELL. ATP contacts are provided by residues 596–604 and lysine 619; that span reads LGKGAFGAV. Disordered regions lie at residues 660–750 and 766–788; these read ERPA…QSFL and ENSK…ESEP. At threonine 667 the chain carries Phosphothreonine. Polar residues predominate over residues 705-717; the sequence is LSSSVEWSTSGER. Residues 731–740 are compositionally biased toward acidic residues; the sequence is SDDEDDDEDE. The segment covering 778–787 has biased composition (basic and acidic residues); it reads NEKNGCHESE. Aspartate 848 serves as the catalytic Proton acceptor. The residue at position 871 (threonine 871) is a Phosphothreonine. Threonine 899 and threonine 904 each carry phosphothreonine; by autocatalysis. The histidyl-tRNA synthetase-like stretch occupies residues 1022–1493; sequence VDGKAYRTMM…DHVLQKLRTK (472 aa). N6-acetyllysine is present on lysine 1259.

Belongs to the protein kinase superfamily. Ser/Thr protein kinase family. GCN2 subfamily. Homodimer; homodimerization is important for kinase activation by uncharged tRNAs. Interacts with GCN1; this interaction stimulates EIF2AK4/GCN2 kinase activity and is impaired by IMPACT upon a variety of stress conditions, such as amino acid depletion, UV-C irradiation, proteasome inhibitor treatment and glucose deprivation. Interacts with DNAJC3; this interaction inhibits EIF2AK4/GCN2 kinase activity during endoplasmic reticulum (ER), hypothermic and amino acid-starving stress conditions. Interacts with MAP3K20; activates EIF2AK4/GCN2 kinase activity in response to moderate ribotoxic stress. As to quaternary structure, (Microbial infection) Interacts with hepatitis E virus (HEV) ORF1 protease; this interaction inhibits dimerization of EIF2AK4 and prevents EIF2AK4-mediated phosphorylation of EIF2A. In terms of processing, autophosphorylated; autophosphorylation on Thr-899 is increased upon amino acid starvation and in UV irradiation cells and inhibited in presence of IMPACT. In terms of tissue distribution, widely expressed. Expressed in lung, smooth muscle cells and macrophages.

The protein localises to the cytoplasm. The catalysed reaction is L-seryl-[protein] + ATP = O-phospho-L-seryl-[protein] + ADP + H(+). It catalyses the reaction L-threonyl-[protein] + ATP = O-phospho-L-threonyl-[protein] + ADP + H(+). Functionally, metabolic-stress sensing protein kinase that phosphorylates the alpha subunit of eukaryotic translation initiation factor 2 (EIF2S1/eIF-2-alpha) in response to low amino acid availability. Plays a role as an activator of the integrated stress response (ISR) required for adaptation to amino acid starvation. EIF2S1/eIF-2-alpha phosphorylation in response to stress converts EIF2S1/eIF-2-alpha into a global protein synthesis inhibitor, leading to a global attenuation of cap-dependent translation, and thus to a reduced overall utilization of amino acids, while concomitantly initiating the preferential translation of ISR-specific mRNAs, such as the transcriptional activator ATF4, and hence allowing ATF4-mediated reprogramming of amino acid biosynthetic gene expression to alleviate nutrient depletion. Binds uncharged tRNAs. Required for the translational induction of protein kinase PRKCH following amino acid starvation. Involved in cell cycle arrest by promoting cyclin D1 mRNA translation repression after the unfolded protein response pathway (UPR) activation or cell cycle inhibitor CDKN1A/p21 mRNA translation activation in response to amino acid deprivation. Plays a role in the consolidation of synaptic plasticity, learning as well as formation of long-term memory. Plays a role in neurite outgrowth inhibition. Plays a proapoptotic role in response to glucose deprivation. Promotes global cellular protein synthesis repression in response to UV irradiation independently of the stress-activated protein kinase/c-Jun N-terminal kinase (SAPK/JNK) and p38 MAPK signaling pathways. Plays a role in the antiviral response against alphavirus infection; impairs early viral mRNA translation of the incoming genomic virus RNA, thus preventing alphavirus replication. Its function is as follows. (Microbial infection) Plays a role in modulating the adaptive immune response to yellow fever virus infection; promotes dendritic cells to initiate autophagy and antigene presentation to both CD4(+) and CD8(+) T-cells under amino acid starvation. This chain is eIF-2-alpha kinase GCN2, found in Homo sapiens (Human).